Reading from the N-terminus, the 232-residue chain is MQDIRQETLNECTRAEQSASVVLWEIDLTEVGGERYFFCNEQNEKGEPVTWQGRQYQPYPIQGSGFELNGKGTSTRPTLTVSNLYGMVTGMAEDMQSLVGGTVVRRKVYARFLDAVNFVNGNSYADPEQEVISRWRIEQCSELSAVSASFVLSTPTETDGAVFPGRIMLANTCTWTYRGDECGYSGPAVADEYDQPTSDITKDKCSKCLSGCKFRNNVGNFGGFLSINKLSQ.

Residues Cys173, Cys182, Cys205, and Cys212 each coordinate [4Fe-4S] cluster.

The protein belongs to the lambda-like tail tip protein L family. Requires [4Fe-4S] cluster as cofactor.

It localises to the virion. The protein resides in the host cytoplasm. Part of the distal tail tip complex which plays a role in DNA ejection during entry, and in tail assembly initiation during exit. The tail tip complex is assembled successively with three tail tip proteins J, one tail tip protein I, one tail tip protein L and one tail tip protein K. The tail tip complex interacts with tail measure protein to initiate tail tube assembly. The formation of the tail tip complex is completed by the addition of tail tip protein M, which is followed by tail tube polymerization. In Escherichia phage lambda (Bacteriophage lambda), this protein is Tail tip protein L (L).